The sequence spans 273 residues: Ribosomal RNA small subunit methyltransferase I (273 aa).

Belongs to the methyltransferase superfamily. RsmI family.

It localises to the cytoplasm. It catalyses the reaction cytidine(1402) in 16S rRNA + S-adenosyl-L-methionine = 2'-O-methylcytidine(1402) in 16S rRNA + S-adenosyl-L-homocysteine + H(+). In terms of biological role, catalyzes the 2'-O-methylation of the ribose of cytidine 1402 (C1402) in 16S rRNA. The polypeptide is Ribosomal RNA small subunit methyltransferase I (Xylella fastidiosa (strain Temecula1 / ATCC 700964)).